A 190-amino-acid chain; its full sequence is MAAGELEGGKPLSGLLNALAQDTFHGYPGITEELLRSQLYPEVPPEEFRPFLAKMRGILKSIASADMDFNQLEAFLTAQTKKQGGITSDQAAVISKFWKSHKTKIRESLMNQSRWNSGLRGLSWRVDGKSQSRHSAQIHTPVAIIELELGKYGQESEFLCLEFDEVKVNQILKTLSEVEESISTLISQPN.

Ala2 bears the N-acetylalanine mark. A sufficient for interaction with SLC12A2 region spans residues 2-123; it reads AAGELEGGKP…RWNSGLRGLS (122 aa). Residues His101, Met110, and His134 each contribute to the Cu cation site. A COMM domain is found at 118–186; it reads GLRGLSWRVD…EVEESISTLI (69 aa). The required for binding to PtdIns(4,5)P2 stretch occupies residues 125-190; it reads RVDGKSQSRH…SISTLISQPN (66 aa).

It belongs to the COMM domain-containing protein 1 family. Component of the commander complex consisting of the CCC subcomplex and the retriever subcomplex. Component of the CCC (COMMD/CCDC22/CCDC93) subcomplex consisting of COMMD1, COMMD2, COMMD3, COMMD4, COMMD5, COMMD6, COMMD7, COMMD8, COMMD9, COMMD10, CCDC22 and CCDC93; within the complex forms a heterodimer with COMMD6. Interacts with VPS35L; the interaction associates the CCC complex with the retriever complex. Identified in a complex with an E3 ubiquitin ligase complex composed of TCEB1/elongin C, CUL2, SOCS1 and RBX1; in the complex interacts directly with SOCS1 and CUL2. Identified in a complex with NF-kappa-B. Interacts directly with SLC12A2. Interacts directly with ATP7B (via the N-terminal region). Interacts with ATP7A. Interacts with FAM107A; this interaction stabilizes COMMD1 in the nucleus. Interacts with CCS, CDKN2A, RELA, REL, RELB, NFKB1/p105, NFKB2/p100, NFKBIB, SCNN1D, SCNN1B, CFTR, CLU, SGK1, AKT1, CUL1, CUL2, CUL3, CUL4A, CUL4B, CUL5, CUL7, HIF1A. In terms of processing, acetylated by EP300 ina stimuli-specific manner; protecting it from XIAP-mediated proteasomal degradation and required for interaction with RElA in response to stress. Post-translationally, ubiquitinated; undergoes both 'Lys-63'- and 'Lys-48'-linked polyubiquitination. Ubiquitinated by XIAP, leading to its proteasomal degradation. As to expression, ubiquitous. Highest expression in the liver, with lower expression in brain, lung, placenta, pancreas, small intestine, heart, skeletal muscle, kidney and placenta. Down-regulated in cancer tissues.

It is found in the nucleus. Its subcellular location is the cytoplasm. It localises to the endosome membrane. The protein localises to the cytoplasmic vesicle. The protein resides in the early endosome. It is found in the recycling endosome. Functionally, scaffold protein in the commander complex that is essential for endosomal recycling of transmembrane cargos; the commander complex is composed of the CCC subcomplex and the retriever subcomplex. Can modulate activity of cullin-RING E3 ubiquitin ligase (CRL) complexes by displacing CAND1; in vitro promotes CRL E3 activity and dissociates CAND1 from CUL1 and CUL2. Promotes ubiquitination of NF-kappa-B subunit RELA and its subsequent proteasomal degradation. Down-regulates NF-kappa-B activity. Involved in the regulation of membrane expression and ubiquitination of SLC12A2. Modulates Na(+) transport in epithelial cells by regulation of apical cell surface expression of amiloride-sensitive sodium channel (ENaC) subunits and by promoting their ubiquitination presumably involving NEDD4L. Promotes the localization of SCNN1D to recycling endosomes. Promotes CFTR cell surface expression through regulation of its ubiquitination. Down-regulates SOD1 activity by interfering with its homodimerization. Plays a role in copper ion homeostasis. Involved in copper-dependent ATP7A trafficking between the trans-Golgi network and vesicles in the cell periphery; the function is proposed to depend on its association within the CCC complex and cooperation with the WASH complex on early endosomes. Can bind one copper ion per monomer. May function to facilitate biliary copper excretion within hepatocytes. Binds to phosphatidylinositol 4,5-bisphosphate (PtdIns(4,5)P2). Involved in the regulation of HIF1A-mediated transcription; competes with ARNT/Hif-1-beta for binding to HIF1A resulting in decreased DNA binding and impaired transcriptional activation by HIF-1. Negatively regulates neuroblastoma G1/S phase cell cycle progression and cell proliferation by stimulating ubiquitination of NF-kappa-B subunit RELA and NF-kappa-B degradation in a FAM107A- and actin-dependent manner. The sequence is that of COMM domain-containing protein 1 (COMMD1) from Homo sapiens (Human).